A 178-amino-acid chain; its full sequence is MSRVGKKPVIIPDGVTVTFDGNLCTVKGPKGELSRELHPDIKITVEGNEITFERPSDHKEHRALHGTMRALVNNMVEGVTKGFERALELNGVGYRASKSGNKLVLNVGYSHPVEITPEEGLEIEVPSNTKVVVKGINKERVGALASNIRAVRLPEPYKGKGIRYEGEYVRRKEGKTGK.

The protein belongs to the universal ribosomal protein uL6 family. Part of the 50S ribosomal subunit.

In terms of biological role, this protein binds to the 23S rRNA, and is important in its secondary structure. It is located near the subunit interface in the base of the L7/L12 stalk, and near the tRNA binding site of the peptidyltransferase center. The polypeptide is Large ribosomal subunit protein uL6 (Shouchella clausii (strain KSM-K16) (Alkalihalobacillus clausii)).